Consider the following 77-residue polypeptide: Large ribosomal subunit protein uL29 (77 aa).

Belongs to the universal ribosomal protein uL29 family.

This is Large ribosomal subunit protein uL29 from Corynebacterium urealyticum (strain ATCC 43042 / DSM 7109).